The sequence spans 338 residues: Anthranilate phosphoribosyltransferase (338 aa).

Residues G80, 83–84 (GD), T88, 90–93 (NIST), 108–116 (KHGNRAMSS), and S120 each bind 5-phospho-alpha-D-ribose 1-diphosphate. G80 contributes to the anthranilate binding site. S92 lines the Mg(2+) pocket. N111 contributes to the anthranilate binding site. Residue R166 participates in anthranilate binding. 2 residues coordinate Mg(2+): D225 and E226.

The protein belongs to the anthranilate phosphoribosyltransferase family. As to quaternary structure, homodimer. Mg(2+) is required as a cofactor.

It carries out the reaction N-(5-phospho-beta-D-ribosyl)anthranilate + diphosphate = 5-phospho-alpha-D-ribose 1-diphosphate + anthranilate. The protein operates within amino-acid biosynthesis; L-tryptophan biosynthesis; L-tryptophan from chorismate: step 2/5. Catalyzes the transfer of the phosphoribosyl group of 5-phosphorylribose-1-pyrophosphate (PRPP) to anthranilate to yield N-(5'-phosphoribosyl)-anthranilate (PRA). The chain is Anthranilate phosphoribosyltransferase from Herpetosiphon aurantiacus (strain ATCC 23779 / DSM 785 / 114-95).